Consider the following 522-residue polypeptide: Signal transduction histidine-protein kinase/phosphatase MprB (522 aa).

The Cytoplasmic segment spans residues 1–30 (MIRLHRPQRPPLRAPLRATPSLSLRWRVML). Residues 31 to 51 (LAMSMVAMVVVLMAFAVYAVI) traverse the membrane as a helical segment. Topologically, residues 52–167 (SAALYSDIDN…PTEAVMNKLR (116 aa)) are extracellular. The chain crosses the membrane as a helical span at residues 168–188 (WVLLIVGGVGVAVAAVAGGMV). At 189–522 (TRAGLRPVAR…SVDSQSARAR (334 aa)) the chain is on the cytoplasmic side. In terms of domain architecture, HAMP spans 190–242 (RAGLRPVARLTEAAERVARTDDLRPIPVFGSDELARLTESFNLMLRALAESRE). The region spanning 250 to 470 (DAGHELRTPL…SFYVLLPGRP (221 aa)) is the Histidine kinase domain. His253 is modified (phosphohistidine; by autocatalysis). The segment at 468–522 (GRPLPPAGHSTPAGESETDKAEAATDPAVPVAGDTANSRESANVISVDSQSARAR) is disordered. Residues 502 to 522 (TANSRESANVISVDSQSARAR) are compositionally biased toward polar residues.

Mg(2+) is required as a cofactor. Requires Mn(2+) as cofactor. In terms of processing, autophosphorylated.

It localises to the cell membrane. The catalysed reaction is ATP + protein L-histidine = ADP + protein N-phospho-L-histidine.. Its function is as follows. Member of the two-component regulatory system MprB/MprA which contributes to maintaining a balance among several systems involved in stress resistance and is required for establishment and maintenance of persistent infection in the host. In response to environmental signals MprB acts both as a membrane-associated protein kinase that undergoes autophosphorylation and subsequently transfers the phosphate to MprA, and a protein phosphatase that dephosphorylates phospho-MprA. The polypeptide is Signal transduction histidine-protein kinase/phosphatase MprB (mprB) (Mycobacterium avium (strain 104)).